The primary structure comprises 144 residues: AP-4 complex subunit sigma-1 (144 aa).

It belongs to the adaptor complexes small subunit family. As to quaternary structure, adaptor protein complex 4 (AP-4) is a heterotetramer composed of two large adaptins (epsilon-type subunit AP4E1 and beta-type subunit AP4B1), a medium adaptin (mu-type subunit AP4M1) and a small adaptin (sigma-type AP4S1). Widely expressed.

The protein localises to the golgi apparatus. It localises to the trans-Golgi network membrane. Component of the adaptor protein complex 4 (AP-4). Adaptor protein complexes are vesicle coat components involved both in vesicle formation and cargo selection. They control the vesicular transport of proteins in different trafficking pathways. AP-4 forms a non clathrin-associated coat on vesicles departing the trans-Golgi network (TGN) and may be involved in the targeting of proteins from the trans-Golgi network (TGN) to the endosomal-lysosomal system. It is also involved in protein sorting to the basolateral membrane in epithelial cells and the proper asymmetric localization of somatodendritic proteins in neurons. AP-4 is involved in the recognition and binding of tyrosine-based sorting signals found in the cytoplasmic part of cargos, but may also recognize other types of sorting signal. This is AP-4 complex subunit sigma-1 from Homo sapiens (Human).